Here is a 304-residue protein sequence, read N- to C-terminus: Glycine--tRNA ligase alpha subunit (304 aa).

This sequence belongs to the class-II aminoacyl-tRNA synthetase family. As to quaternary structure, tetramer of two alpha and two beta subunits.

It is found in the cytoplasm. The enzyme catalyses tRNA(Gly) + glycine + ATP = glycyl-tRNA(Gly) + AMP + diphosphate. This is Glycine--tRNA ligase alpha subunit from Streptococcus agalactiae serotype Ia (strain ATCC 27591 / A909 / CDC SS700).